The primary structure comprises 154 residues: MATRLCCQLDPSRDVLCLRPVGAESRGRPLSGPLGTLSSPSPSAVPADHGAHLSLRGLPVCAFSSAGPCALRFTSARCMETTVNAHQILPKVLHKRTLGLPAMSTTDLEAYFKDCVFKDWEELGEEIRLKVFVLGGCRHKLVCAPAPCNFFTSA.

Positions 68–117 (PCALRFTSARCMETTVNAHQILPKVLHKRTLGLPAMSTTDLEAYFKDCVF) are mitochondrial targeting sequence.

Belongs to the orthohepadnavirus protein X family. As to quaternary structure, may form homodimer. May interact with host CEBPA, CFLAR, CREB1, DDB1, E4F1, HBXIP, HSPD1/HSP60, NFKBIA, POLR2E and SMAD4. Interacts with host SMC5-SMC6 complex and induces its degradation. Interacts with host TRPC4AP; leading to prevent ubiquitination of TRPC4AP. Interacts with host PLSCR1; this interaction promotes ubiquitination and degradation of HBx and impairs HBx-mediated cell proliferation. In terms of processing, a fraction may be phosphorylated in insect cells and HepG2 cells, a human hepatoblastoma cell line. Phosphorylated in vitro by host protein kinase C or mitogen-activated protein kinase. N-acetylated in insect cells.

It localises to the host cytoplasm. Its subcellular location is the host nucleus. It is found in the host mitochondrion. Functionally, multifunctional protein that plays a role in silencing host antiviral defenses and promoting viral transcription. Does not seem to be essential for HBV infection. May be directly involved in development of cirrhosis and liver cancer (hepatocellular carcinoma). Most of cytosolic activities involve modulation of cytosolic calcium. The effect on apoptosis is controversial depending on the cell types in which the studies have been conducted. May induce apoptosis by localizing in mitochondria and causing loss of mitochondrial membrane potential. May also modulate apoptosis by binding host CFLAR, a key regulator of the death-inducing signaling complex (DISC). Promotes viral transcription by using the host E3 ubiquitin ligase DDB1 to target the SMC5-SMC6 complex to proteasomal degradation. This host complex would otherwise bind to viral episomal DNA, and prevents its transcription. Moderately stimulates transcription of many different viral and cellular transcription elements. Promoters and enhancers stimulated by HBx contain DNA binding sites for NF-kappa-B, AP-1, AP-2, c-EBP, ATF/CREB, or the calcium-activated factor NF-AT. In Homo sapiens (Human), this protein is Protein X.